We begin with the raw amino-acid sequence, 63 residues long: Small ribosomal subunit protein bS21 (63 aa).

The protein belongs to the bacterial ribosomal protein bS21 family.

The chain is Small ribosomal subunit protein bS21 from Porphyromonas gingivalis (strain ATCC 33277 / DSM 20709 / CIP 103683 / JCM 12257 / NCTC 11834 / 2561).